Consider the following 117-residue polypeptide: Ribosome-binding factor A (117 aa).

Belongs to the RbfA family. As to quaternary structure, monomer. Binds 30S ribosomal subunits, but not 50S ribosomal subunits or 70S ribosomes.

Its subcellular location is the cytoplasm. One of several proteins that assist in the late maturation steps of the functional core of the 30S ribosomal subunit. Associates with free 30S ribosomal subunits (but not with 30S subunits that are part of 70S ribosomes or polysomes). Required for efficient processing of 16S rRNA. May interact with the 5'-terminal helix region of 16S rRNA. This is Ribosome-binding factor A from Anaplasma marginale (strain St. Maries).